The primary structure comprises 410 residues: Aspartic proteinase Asp1 (410 aa).

Residues 1-23 form the signal peptide; it reads MTARLALLASLLLLLQLVPPSSA. The propeptide at 24-46 is removed in mature form; it reads VVLELHGNVYPIGHFFITMNIGD. Residues 38 to 392 form the Peptidase A1 domain; the sequence is FFITMNIGDP…DSERSLLGWV (355 aa). Residues Asp56 and Asp257 contribute to the active site.

Belongs to the peptidase A1 family.

This is Aspartic proteinase Asp1 (ASP1) from Oryza sativa subsp. japonica (Rice).